A 68-amino-acid polypeptide reads, in one-letter code: MPKLKTKSAVKKRFKLTASGKVIASQAGKKHFMRRRTKAQIRNLRGTTILCPQDGYNIKKYFLPYGIN.

Belongs to the bacterial ribosomal protein bL35 family.

The sequence is that of Large ribosomal subunit protein bL35 from Rickettsia felis (strain ATCC VR-1525 / URRWXCal2) (Rickettsia azadi).